We begin with the raw amino-acid sequence, 110 residues long: Large ribosomal subunit protein uL22 (110 aa).

This sequence belongs to the universal ribosomal protein uL22 family. In terms of assembly, part of the 50S ribosomal subunit.

This protein binds specifically to 23S rRNA; its binding is stimulated by other ribosomal proteins, e.g. L4, L17, and L20. It is important during the early stages of 50S assembly. It makes multiple contacts with different domains of the 23S rRNA in the assembled 50S subunit and ribosome. Functionally, the globular domain of the protein is located near the polypeptide exit tunnel on the outside of the subunit, while an extended beta-hairpin is found that lines the wall of the exit tunnel in the center of the 70S ribosome. The sequence is that of Large ribosomal subunit protein uL22 from Teredinibacter turnerae (strain ATCC 39867 / T7901).